The sequence spans 65 residues: Large ribosomal subunit protein bL35 (65 aa).

Belongs to the bacterial ribosomal protein bL35 family.

In Rubrobacter xylanophilus (strain DSM 9941 / JCM 11954 / NBRC 16129 / PRD-1), this protein is Large ribosomal subunit protein bL35.